A 622-amino-acid polypeptide reads, in one-letter code: Apical membrane antigen 1 (622 aa).

A signal peptide spans 1 to 24; sequence MRKLYCVLLLSAFEFTYMINFGRG. The Extracellular portion of the chain corresponds to 25–546; sequence QNYWEHPYQK…EHKPTYDKMK (522 aa). 5 disulfide bridges follow: Cys149-Cys302, Cys217-Cys247, Cys263-Cys275, Cys320-Cys418, and Cys337-Cys409. Asn162 carries an N-linked (GlcNAc...) asparagine glycan. N-linked (GlcNAc...) asparagine glycans are attached at residues Asn286, Asn371, Asn421, Asn422, and Asn499. 3 cysteine pairs are disulfide-bonded: Cys443–Cys502, Cys490–Cys507, and Cys492–Cys509. The helical transmembrane segment at 547-567 threads the bilayer; it reads IIIASSAAVAVLATILMVYLY. Over 568–622 the chain is Cytoplasmic; sequence KRKGNAEKYDKMDEPQHYGKSNSRNDEMLDPEASFWGEEKRASHTTPVLMEKPYY. Basic and acidic residues predominate over residues 578-594; that stretch reads KMDEPQHYGKSNSRNDE. Residues 578–607 are disordered; that stretch reads KMDEPQHYGKSNSRNDEMLDPEASFWGEEK.

It belongs to the apicomplexan parasites AMA1 family.

The protein resides in the membrane. Functionally, involved in parasite invasion of erythrocytes. The chain is Apical membrane antigen 1 (AMA-1) from Plasmodium falciparum (isolate FC27 / Papua New Guinea).